The following is a 556-amino-acid chain: MNVMQENQIKLIEHIKQAVVQAVGLEEAEVPEILLEVPKDKKHGDYSTNIAMQLARVAKKAPRQIAESIVPELKKDNKLIKEVEIAGPGFINFYLDNAYLTDLVPVILTEDKQYGESDFGKGEKFQIEFVSANPTGDLHLGHARGAAIGDSLANIMKMAGFDVSREYYINDAGNQINNLVLSAEARYFEALGLDSEFPEDGYRGADIISLGKDLAAKYGDKYVHTSEEERRSVFRVDALAFETGKLRADLEEFRVSFDEWFSETSLYEENKVLPALERLRENGYIYEQDGATWLRTTDFEDDKDRVLIKSDGSYTYFLPDIAYHLNKLERGFDVLIDIWGADHHGYIPRMRAAIEALGYSPNQLEVEIIQLVHLFEDGVQVKMSKRTGKSVTMRDLIEEVGLDATRYFFAMRSSDTHMNFDMSLAKSTSNDNPVYYVQYAHARISSILRSGKEQGLEVTKDADMSLLQTEAEYDLLKVLGEFADVVAEAATKRAPHRIVRYLNDLASSFHRFYNSNKVLDMDNLEVTKARLALIKTAQITLRNGLTLLGVSAPEKM.

Residues 132 to 142 (ANPTGDLHLGH) carry the 'HIGH' region motif.

The protein belongs to the class-I aminoacyl-tRNA synthetase family. As to quaternary structure, monomer.

The protein localises to the cytoplasm. It carries out the reaction tRNA(Arg) + L-arginine + ATP = L-arginyl-tRNA(Arg) + AMP + diphosphate. The chain is Arginine--tRNA ligase from Listeria monocytogenes serotype 4b (strain F2365).